The primary structure comprises 153 residues: Cytochrome c-type biogenesis protein CcmE (153 aa).

Residues 1-8 lie on the Cytoplasmic side of the membrane; that stretch reads MTTRRGRR. The chain crosses the membrane as a helical; Signal-anchor for type II membrane protein span at residues 9-29; the sequence is ALLIAGGVGLLALAAALVLNA. The Periplasmic segment spans residues 30-153; that stretch reads LRSNLVFFFS…PSATLQTEAR (124 aa). 2 residues coordinate heme: histidine 124 and tyrosine 128.

It belongs to the CcmE/CycJ family.

It is found in the cell inner membrane. In terms of biological role, heme chaperone required for the biogenesis of c-type cytochromes. Transiently binds heme delivered by CcmC and transfers the heme to apo-cytochromes in a process facilitated by CcmF and CcmH. This Bordetella parapertussis (strain 12822 / ATCC BAA-587 / NCTC 13253) protein is Cytochrome c-type biogenesis protein CcmE.